The sequence spans 275 residues: MSIRLYKSYTPGTRNRALSVFDELTKTTPEKSLIRKNHRNKGRNNRGIITVRHRGGGHKRRYRLIDFKRNKYGVEGVIASIEYDPNRNARIALVNYTDGEKRYILQPKNLTVGDRILSGSGSPLNIGNTLPLNEIPLGSSIHNIELIPNRGGQIVRAGGTSAKILAKDGDYITLRLPSKEIRLVRKECFATIGEVSNNDAFLVQSGKAGRTRWLGKRPTVRGSVMNPCDHPHGGGEGRAPIGRTRPLTPWGKPALGMKTRKRKKLSDAYILRRRS.

Residues 219–254 (TVRGSVMNPCDHPHGGGEGRAPIGRTRPLTPWGKPA) form a disordered region.

The protein belongs to the universal ribosomal protein uL2 family. Part of the 50S ribosomal subunit.

The protein localises to the plastid. The protein resides in the chloroplast. In Phaeodactylum tricornutum (strain CCAP 1055/1), this protein is Large ribosomal subunit protein uL2c (rpl2).